Reading from the N-terminus, the 137-residue chain is Thionin-like protein 1 (137 aa).

Positions 1–23 are cleaved as a signal peptide; that stretch reads MEDKRVAMLVVMMLVMGNMLIEA.

The protein belongs to the plant thionin (TC 1.C.44) family. Is disulfide-linked.

Its subcellular location is the secreted. In terms of biological role, may be involved in plant defense. This is Thionin-like protein 1 from Arabidopsis thaliana (Mouse-ear cress).